The chain runs to 667 residues: DNA ligase (667 aa).

NAD(+) is bound by residues 32–36 (DSEYD), 81–82 (SL), and Glu110. The active-site N6-AMP-lysine intermediate is the Lys112. Positions 133, 167, 283, and 307 each coordinate NAD(+). Cys401, Cys404, Cys419, and Cys424 together coordinate Zn(2+). In terms of domain architecture, BRCT spans 586 to 667 (EGHPEFSGKT…FVDKQNELNS (82 aa)).

This sequence belongs to the NAD-dependent DNA ligase family. LigA subfamily. Requires Mg(2+) as cofactor. The cofactor is Mn(2+).

It carries out the reaction NAD(+) + (deoxyribonucleotide)n-3'-hydroxyl + 5'-phospho-(deoxyribonucleotide)m = (deoxyribonucleotide)n+m + AMP + beta-nicotinamide D-nucleotide.. DNA ligase that catalyzes the formation of phosphodiester linkages between 5'-phosphoryl and 3'-hydroxyl groups in double-stranded DNA using NAD as a coenzyme and as the energy source for the reaction. It is essential for DNA replication and repair of damaged DNA. The protein is DNA ligase of Staphylococcus aureus (strain bovine RF122 / ET3-1).